Reading from the N-terminus, the 162-residue chain is MTMPGARGWPKWFALAALVIVLDQISKLYFNSRFQYGEIRPVVEGFFNFTLVYNPGAAFSFLHDAGGWQKYLFTILAFAVSGWLGWNIVKRRFSGLMNLAAAFIMGGALGNVIDRLAYGHVIDFIMVHYYNEWYYPAFNLADSFICVGAALMVADSMKKPSR.

4 consecutive transmembrane segments (helical) span residues 12–32, 42–62, 66–86, and 93–113; these read WFAL…YFNS, VVEG…FSFL, GGWQ…WLGW, and FSGL…GNVI. Residues Asp123 and Asp142 contribute to the active site. Residues 133-153 traverse the membrane as a helical segment; the sequence is WYYPAFNLADSFICVGAALMV.

Belongs to the peptidase A8 family.

The protein resides in the cell inner membrane. It catalyses the reaction Release of signal peptides from bacterial membrane prolipoproteins. Hydrolyzes -Xaa-Yaa-Zaa-|-(S,diacylglyceryl)Cys-, in which Xaa is hydrophobic (preferably Leu), and Yaa (Ala or Ser) and Zaa (Gly or Ala) have small, neutral side chains.. Its pathway is protein modification; lipoprotein biosynthesis (signal peptide cleavage). Its function is as follows. This protein specifically catalyzes the removal of signal peptides from prolipoproteins. This Chromobacterium violaceum (strain ATCC 12472 / DSM 30191 / JCM 1249 / CCUG 213 / NBRC 12614 / NCIMB 9131 / NCTC 9757 / MK) protein is Lipoprotein signal peptidase.